The following is a 677-amino-acid chain: DNA ligase (677 aa).

NAD(+) contacts are provided by residues 43–47 (DHVYD), 92–93 (SM), and E122. The active-site N6-AMP-lysine intermediate is the K124. R145, E179, K295, and K319 together coordinate NAD(+). Residues C413, C416, C431, and C436 each coordinate Zn(2+). Positions 599 to 677 (TSDSYFNGKT…EADLDNYLAQ (79 aa)) constitute a BRCT domain.

This sequence belongs to the NAD-dependent DNA ligase family. LigA subfamily. Mg(2+) serves as cofactor. Mn(2+) is required as a cofactor.

It carries out the reaction NAD(+) + (deoxyribonucleotide)n-3'-hydroxyl + 5'-phospho-(deoxyribonucleotide)m = (deoxyribonucleotide)n+m + AMP + beta-nicotinamide D-nucleotide.. Functionally, DNA ligase that catalyzes the formation of phosphodiester linkages between 5'-phosphoryl and 3'-hydroxyl groups in double-stranded DNA using NAD as a coenzyme and as the energy source for the reaction. It is essential for DNA replication and repair of damaged DNA. The polypeptide is DNA ligase (Latilactobacillus sakei subsp. sakei (strain 23K) (Lactobacillus sakei subsp. sakei)).